The sequence spans 355 residues: Alkanal monooxygenase alpha chain (355 aa).

The protein belongs to the bacterial luciferase oxidoreductase family. In terms of assembly, heterodimer of an alpha and a beta chain.

It carries out the reaction a long-chain fatty aldehyde + FMNH2 + O2 = a long-chain fatty acid + hnu + FMN + H2O + 2 H(+). In terms of biological role, light-emitting reaction in luminous bacteria. The protein is Alkanal monooxygenase alpha chain (luxA) of Vibrio harveyi (Beneckea harveyi).